Here is a 20-residue protein sequence, read N- to C-terminus: Ribulose bisphosphate carboxylase small subunit (20 aa).

Belongs to the RuBisCO small chain family. As to quaternary structure, heterohexadecamer of 8 large and 8 small subunits.

The protein localises to the plastid. It is found in the chloroplast. In terms of biological role, ruBisCO catalyzes two reactions: the carboxylation of D-ribulose 1,5-bisphosphate, the primary event in carbon dioxide fixation, as well as the oxidative fragmentation of the pentose substrate in the photorespiration process. Both reactions occur simultaneously and in competition at the same active site. Although the small subunit is not catalytic it is essential for maximal activity. The polypeptide is Ribulose bisphosphate carboxylase small subunit (Chattonella marina var. antiqua (Red tide flagellate)).